Reading from the N-terminus, the 171-residue chain is Phosphopantetheine adenylyltransferase (171 aa).

T9 provides a ligand contact to substrate. ATP contacts are provided by residues 9-10 (TF) and H17. K41, L73, and R87 together coordinate substrate. ATP is bound by residues 88 to 90 (GLR), E98, and 123 to 129 (YQFISGT).

Belongs to the bacterial CoaD family. In terms of assembly, homohexamer. Mg(2+) serves as cofactor.

The protein localises to the cytoplasm. The enzyme catalyses (R)-4'-phosphopantetheine + ATP + H(+) = 3'-dephospho-CoA + diphosphate. Its pathway is cofactor biosynthesis; coenzyme A biosynthesis; CoA from (R)-pantothenate: step 4/5. Its function is as follows. Reversibly transfers an adenylyl group from ATP to 4'-phosphopantetheine, yielding dephospho-CoA (dPCoA) and pyrophosphate. The protein is Phosphopantetheine adenylyltransferase of Paraburkholderia xenovorans (strain LB400).